The primary structure comprises 335 residues: Beta-hexosaminidase (335 aa).

Substrate contacts are provided by residues aspartate 60, arginine 68, arginine 133, and 163 to 164 (KH). Histidine 176 functions as the Proton donor/acceptor in the catalytic mechanism. The active-site Nucleophile is aspartate 247.

The protein belongs to the glycosyl hydrolase 3 family. NagZ subfamily.

Its subcellular location is the cytoplasm. The catalysed reaction is Hydrolysis of terminal non-reducing N-acetyl-D-hexosamine residues in N-acetyl-beta-D-hexosaminides.. The protein operates within cell wall biogenesis; peptidoglycan recycling. Its function is as follows. Plays a role in peptidoglycan recycling by cleaving the terminal beta-1,4-linked N-acetylglucosamine (GlcNAc) from peptide-linked peptidoglycan fragments, giving rise to free GlcNAc, anhydro-N-acetylmuramic acid and anhydro-N-acetylmuramic acid-linked peptides. This is Beta-hexosaminidase from Xylella fastidiosa (strain M23).